The following is a 105-amino-acid chain: Larval cuticle protein 65Ag1 (105 aa).

A signal peptide spans 1–18 (MKFLIVFVALFAVALAAP). Residues 34 to 103 (PESFKYDWET…PQGAHLPVAP (70 aa)) form the Chitin-binding type R&amp;R domain.

Component of the cuticle of the larva. This is Larval cuticle protein 65Ag1 from Drosophila melanogaster (Fruit fly).